Reading from the N-terminus, the 241-residue chain is Chalcone--flavanone isomerase C (241 aa).

Residues threonine 50, asparagine 115, and serine 192 each contribute to the substrate site.

The protein belongs to the chalcone isomerase family.

It catalyses the reaction a chalcone = a flavanone.. The protein operates within secondary metabolite biosynthesis; flavonoid biosynthesis. In terms of biological role, catalyzes the intramolecular cyclization of bicyclic chalcones into tricyclic (S)-flavanones. Responsible for the isomerization of 4,2',4',6'-tetrahydroxychalcone (also termed chalcone) into naringenin. The protein is Chalcone--flavanone isomerase C (CHI3) of Petunia hybrida (Petunia).